Consider the following 271-residue polypeptide: Elongation factor Ts (271 aa).

Positions T76–V79 are involved in Mg(2+) ion dislocation from EF-Tu.

It belongs to the EF-Ts family.

The protein resides in the cytoplasm. Associates with the EF-Tu.GDP complex and induces the exchange of GDP to GTP. It remains bound to the aminoacyl-tRNA.EF-Tu.GTP complex up to the GTP hydrolysis stage on the ribosome. The protein is Elongation factor Ts of Saccharopolyspora erythraea (strain ATCC 11635 / DSM 40517 / JCM 4748 / NBRC 13426 / NCIMB 8594 / NRRL 2338).